A 210-amino-acid chain; its full sequence is Selenoprotein T2 (210 aa).

An N-terminal signal peptide occupies residues 1–21; the sequence is MAEYSQTGILTALLLFTVVTV. The cysteinyl-selenocysteine (Cys-Sec) cross-link spans 62–65; the sequence is CISU. U65 is a non-standard amino acid (selenocysteine).

Belongs to the SelWTH family. Selenoprotein T subfamily. In terms of processing, may contain a selenide-sulfide bond between Cys-62 and Sec-65. This bond is speculated to serve as redox-active pair. Widely expressed in the embryo.

The chain is Selenoprotein T2 from Danio rerio (Zebrafish).